The chain runs to 381 residues: Alkanesulfonate monooxygenase (381 aa).

It belongs to the SsuD family. Homotetramer.

It carries out the reaction an alkanesulfonate + FMNH2 + O2 = an aldehyde + FMN + sulfite + H2O + 2 H(+). Catalyzes the desulfonation of aliphatic sulfonates. The chain is Alkanesulfonate monooxygenase from Escherichia coli O8 (strain IAI1).